The following is a 298-amino-acid chain: 5,10-methylenetetrahydrofolate reductase (298 aa).

The active-site Proton donor/acceptor is E28. T59 lines the NADH pocket. Residues Y60, A62, H88, R118, G119, D120, A132, Y152, H156, A159, D165, N168, and K172 each contribute to the FAD site. D120 contributes to the (6S)-5-methyl-5,6,7,8-tetrahydrofolate binding site. Q183 provides a ligand contact to NADH. 3 residues coordinate (6S)-5-methyl-5,6,7,8-tetrahydrofolate: Q183, Q219, and R279.

The protein belongs to the methylenetetrahydrofolate reductase family. FAD serves as cofactor.

The catalysed reaction is (6S)-5-methyl-5,6,7,8-tetrahydrofolate + NAD(+) = (6R)-5,10-methylene-5,6,7,8-tetrahydrofolate + NADH + H(+). It functions in the pathway one-carbon metabolism; tetrahydrofolate interconversion. The protein operates within amino-acid biosynthesis; L-methionine biosynthesis via de novo pathway. Functionally, catalyzes the NADH-dependent reduction of 5,10-methylenetetrahydrofolate to 5-methyltetrahydrofolate. Is required to provide the methyl group necessary for methionine synthetase to convert homocysteine to methionine; the methyl group is given by 5-methyltetrahydrofolate. The sequence is that of 5,10-methylenetetrahydrofolate reductase (metF) from Pectobacterium carotovorum subsp. carotovorum (Erwinia carotovora subsp. carotovora).